The sequence spans 269 residues: MAINEYKYGGVLMTKPYYEKENAILVHADSFKLLEKIKPESMDMIFADPPYFLSNGGMSNSGGQIVSVDKGDWDKISSFEEKHDFNRRWIRLARLVLKPNGTIWVSGSLHNIYSVGMALEQEGFKILNNITWQKTNPAPNLSCRYFTHSTETILWARKNDKKSRHYYNYELMKEFNDGKQMKDVWTGSLTKKSEKWAGKHPTQKPEYILERIILASTKENDYILDPFVGSGTTGVVAKRLGRKFIGIDSEKEYLKIAKKRLNKGATYGL.

The protein belongs to the N(4)/N(6)-methyltransferase family.

The enzyme catalyses a 2'-deoxyadenosine in DNA + S-adenosyl-L-methionine = an N(6)-methyl-2'-deoxyadenosine in DNA + S-adenosyl-L-homocysteine + H(+). Functionally, a beta subtype methylase, recognizes the double-stranded sequence 5'-GATC-3', methylates A-2 on both strands, and protects the DNA from cleavage by the LlaDCHI endonuclease. This is Type II methyltransferase M2.LlaDCHI from Lactococcus lactis subsp. cremoris (Streptococcus cremoris).